We begin with the raw amino-acid sequence, 261 residues long: Guanine nucleotide exchange factor BopE (261 aa).

The protein belongs to the GEF (guanine exchange factor) SopE family. Monomer. Interacts with human CDC42.

It localises to the secreted. Its function is as follows. Activator for both CDC42 and RAC1 by directly interacting with these Rho GTPases and acting as a guanine nucleotide exchange factor (GEF). This activation results in actin cytoskeleton rearrangements and stimulates membrane ruffling, thus promoting bacterial entry into non-phagocytic cells. The sequence is that of Guanine nucleotide exchange factor BopE (bopE) from Burkholderia pseudomallei (strain 1710b).